The chain runs to 136 residues: MAISYQLKSPAFRGLGRRKSSVARVILLKGSGKFTINKREAKEYLKSDIYIKDALQPFDLTQTNNTFDIRVTVRGGGLAGQAGAIRLGIARALLEISADYRSVLKEAKMLTRNTKVKERKKPGLRKARKARQFSKR.

Residues 115–136 form a disordered region; that stretch reads KVKERKKPGLRKARKARQFSKR. Positions 117 to 136 are enriched in basic residues; it reads KERKKPGLRKARKARQFSKR.

This sequence belongs to the universal ribosomal protein uS9 family.

The chain is Small ribosomal subunit protein uS9 from Mycoplasmopsis pulmonis (strain UAB CTIP) (Mycoplasma pulmonis).